Here is a 61-residue protein sequence, read N- to C-terminus: N-acetyl-D-glucosamine kinase (61 aa).

Residue Tyr30 is modified to Phosphotyrosine. Residue Ser45 participates in ATP binding.

It belongs to the eukaryotic-type N-acetylglucosamine kinase family. As to quaternary structure, homodimer.

The catalysed reaction is N-acetyl-D-glucosamine + ATP = N-acetyl-D-glucosamine 6-phosphate + ADP + H(+). The enzyme catalyses aldehydo-N-acetyl-D-mannosamine + ATP = aldehydo-N-acetyl-D-mannosamine 6-phosphate + ADP + H(+). It carries out the reaction N-acetyl-D-muramoyl-L-alanyl-D-isoglutamine + ATP = 6-O-phospho-N-acetyl-D-muramoyl-L-alanyl-D-isoglutamine + ADP + H(+). The protein operates within amino-sugar metabolism; N-acetylneuraminate degradation. Its function is as follows. Converts endogenous N-acetylglucosamine (GlcNAc), a major component of complex carbohydrates, from lysosomal degradation or nutritional sources into GlcNAc 6-phosphate. Also has N-acetylmannosamine (ManNAc) kinase activity. Involved in the N-glycolylneuraminic acid (Neu5Gc) degradation pathway. Also involved in innate immunity by promoting detection of bacterial peptidoglycan by NOD2: acts by catalyzing phosphorylation of muramyl dipeptide (MDP), a fragment of bacterial peptidoglycan, to generate 6-O-phospho-muramyl dipeptide, which acts as a direct ligand for NOD2. In Mesocricetus auratus (Golden hamster), this protein is N-acetyl-D-glucosamine kinase.